The chain runs to 88 residues: MAHKKGTGSTRNGRDSNAKRLGVKAYGGETVTAGSILIRQRGTSVLPGINVGIGKDDTLFALTAGVVKFETIRRGLRNRKRINITAAV.

Residues 1–21 (MAHKKGTGSTRNGRDSNAKRL) are disordered.

Belongs to the bacterial ribosomal protein bL27 family.

The chain is Large ribosomal subunit protein bL27 from Parasynechococcus marenigrum (strain WH8102).